A 725-amino-acid polypeptide reads, in one-letter code: Dolichyl-phosphate-mannose--protein mannosyltransferase 5 (725 aa).

6 helical membrane-spanning segments follow: residues 34–54, 117–137, 145–165, 192–212, 219–239, and 256–276; these read QFAV…LYIP, YLWL…LTFF, SVIS…VTVS, IPFT…LGLN, GLFT…EILG, and VVAF…IHFE. 3 consecutive MIR domains span residues 303–356, 368–427, and 439–495; these read PLQV…IETK, QREV…IRML, and LIKL…VESS. The N-linked (GlcNAc...) asparagine glycan is linked to Asn-409. 4 consecutive transmembrane segments (helical) span residues 570–590, 619–639, 644–664, and 673–693; these read IYYL…LIAI, FYNN…PYCL, LYLH…SQYL, and IIGG…FYEF.

Belongs to the glycosyltransferase 39 family.

It localises to the endoplasmic reticulum membrane. The catalysed reaction is a di-trans,poly-cis-dolichyl beta-D-mannosyl phosphate + L-seryl-[protein] = 3-O-(alpha-D-mannosyl)-L-seryl-[protein] + a di-trans,poly-cis-dolichyl phosphate + H(+). The enzyme catalyses a di-trans,poly-cis-dolichyl beta-D-mannosyl phosphate + L-threonyl-[protein] = 3-O-(alpha-D-mannosyl)-L-threonyl-[protein] + a di-trans,poly-cis-dolichyl phosphate + H(+). It functions in the pathway protein modification; protein glycosylation. In terms of biological role, protein mannosyltransferase (PMT) involved in hyphal morphogenesis and drug sensitivity. Transfers mannose from Dol-P-mannose to Ser or Thr residues on proteins. PMT1, PMT2 and PMT4 account for most of the protein-O-glycosylation activity, while PMT5 and PMT6 may specifically modulate a much narrower spectrum of target proteins. Required for biofilm formation. In Candida albicans (strain SC5314 / ATCC MYA-2876) (Yeast), this protein is Dolichyl-phosphate-mannose--protein mannosyltransferase 5.